Consider the following 727-residue polypeptide: Elongation factor 2 (727 aa).

Positions D19–L260 constitute a tr-type G domain. GTP is bound by residues A28–T35, D94–H98, and N148–D151. Diphthamide is present on H603.

This sequence belongs to the TRAFAC class translation factor GTPase superfamily. Classic translation factor GTPase family. EF-G/EF-2 subfamily.

It is found in the cytoplasm. Its function is as follows. Catalyzes the GTP-dependent ribosomal translocation step during translation elongation. During this step, the ribosome changes from the pre-translocational (PRE) to the post-translocational (POST) state as the newly formed A-site-bound peptidyl-tRNA and P-site-bound deacylated tRNA move to the P and E sites, respectively. Catalyzes the coordinated movement of the two tRNA molecules, the mRNA and conformational changes in the ribosome. The sequence is that of Elongation factor 2 (fusA) from Methanococcus vannielii (strain ATCC 35089 / DSM 1224 / JCM 13029 / OCM 148 / SB).